The chain runs to 403 residues: Phosphopentomutase (403 aa).

6 residues coordinate Mn(2+): aspartate 13, aspartate 298, histidine 303, aspartate 339, histidine 340, and histidine 351.

Belongs to the phosphopentomutase family. The cofactor is Mn(2+).

It localises to the cytoplasm. The enzyme catalyses 2-deoxy-alpha-D-ribose 1-phosphate = 2-deoxy-D-ribose 5-phosphate. It catalyses the reaction alpha-D-ribose 1-phosphate = D-ribose 5-phosphate. It participates in carbohydrate degradation; 2-deoxy-D-ribose 1-phosphate degradation; D-glyceraldehyde 3-phosphate and acetaldehyde from 2-deoxy-alpha-D-ribose 1-phosphate: step 1/2. In terms of biological role, isomerase that catalyzes the conversion of deoxy-ribose 1-phosphate (dRib-1-P) and ribose 1-phosphate (Rib-1-P) to deoxy-ribose 5-phosphate (dRib-5-P) and ribose 5-phosphate (Rib-5-P), respectively. This Streptococcus mutans serotype c (strain ATCC 700610 / UA159) protein is Phosphopentomutase.